The sequence spans 491 residues: Trypanothione reductase (491 aa).

35 to 51 (DLQKHHGPPHYAALGGT) is a binding site for FAD. Cysteine 52 and cysteine 57 form a disulfide bridge. The Proton acceptor role is filled by histidine 461.

The protein belongs to the class-I pyridine nucleotide-disulfide oxidoreductase family. Homodimer. The cofactor is FAD. In terms of processing, the N-terminus is blocked.

It is found in the cytoplasm. The enzyme catalyses trypanothione + NADP(+) = trypanothione disulfide + NADPH + H(+). In terms of biological role, trypanothione is the parasite analog of glutathione; this enzyme is the equivalent of glutathione reductase. The chain is Trypanothione reductase (TPR) from Crithidia fasciculata.